Here is an 806-residue protein sequence, read N- to C-terminus: Sucrose synthase (806 aa).

A GT-B glycosyltransferase region spans residues 275–752; it reads MVFNVVILSP…GLQRIEEKYT (478 aa).

Belongs to the glycosyltransferase 1 family. Plant sucrose synthase subfamily.

It carries out the reaction an NDP-alpha-D-glucose + D-fructose = a ribonucleoside 5'-diphosphate + sucrose + H(+). Sucrose-cleaving enzyme that provides UDP-glucose and fructose for various metabolic pathways. The chain is Sucrose synthase (SUCS) from Vicia faba (Broad bean).